The following is a 172-amino-acid chain: Ribosome maturation factor RimM (172 aa).

The PRC barrel domain occupies 96–168 (DGEFYYHEII…RVDVEILEGL (73 aa)).

The protein belongs to the RimM family. As to quaternary structure, binds ribosomal protein uS19.

The protein localises to the cytoplasm. Its function is as follows. An accessory protein needed during the final step in the assembly of 30S ribosomal subunit, possibly for assembly of the head region. Essential for efficient processing of 16S rRNA. May be needed both before and after RbfA during the maturation of 16S rRNA. It has affinity for free ribosomal 30S subunits but not for 70S ribosomes. The polypeptide is Ribosome maturation factor RimM (Streptococcus pneumoniae serotype 4 (strain ATCC BAA-334 / TIGR4)).